We begin with the raw amino-acid sequence, 254 residues long: 4-hydroxy-tetrahydrodipicolinate reductase (254 aa).

Residues 8–13 (GCSGKM), D35, 86–88 (CST), and 110–113 (SANM) each bind NAD(+). The active-site Proton donor/acceptor is H143. Residue H144 coordinates (S)-2,3,4,5-tetrahydrodipicolinate. K147 (proton donor) is an active-site residue. 153-154 (GT) serves as a coordination point for (S)-2,3,4,5-tetrahydrodipicolinate.

It belongs to the DapB family.

It is found in the cytoplasm. It catalyses the reaction (S)-2,3,4,5-tetrahydrodipicolinate + NAD(+) + H2O = (2S,4S)-4-hydroxy-2,3,4,5-tetrahydrodipicolinate + NADH + H(+). It carries out the reaction (S)-2,3,4,5-tetrahydrodipicolinate + NADP(+) + H2O = (2S,4S)-4-hydroxy-2,3,4,5-tetrahydrodipicolinate + NADPH + H(+). The protein operates within amino-acid biosynthesis; L-lysine biosynthesis via DAP pathway; (S)-tetrahydrodipicolinate from L-aspartate: step 4/4. Functionally, catalyzes the conversion of 4-hydroxy-tetrahydrodipicolinate (HTPA) to tetrahydrodipicolinate. The polypeptide is 4-hydroxy-tetrahydrodipicolinate reductase (Clostridium perfringens (strain ATCC 13124 / DSM 756 / JCM 1290 / NCIMB 6125 / NCTC 8237 / Type A)).